The following is a 244-amino-acid chain: Monothiol glutaredoxin-4 (244 aa).

In terms of domain architecture, Thioredoxin spans 2–106 (SVEITFVEQF…LKAAIDEYIQ (105 aa)). Positions 147–244 (NERLSTLTNA…NGELQEMLPN (98 aa)) constitute a Glutaredoxin domain. K164 serves as a coordination point for glutathione. A [2Fe-2S] cluster-binding site is contributed by C172. Glutathione contacts are provided by residues 201-205 (RQGLK) and 226-227 (LD).

This sequence belongs to the glutaredoxin family. Monothiol subfamily. In terms of assembly, homodimer. Interacts with php4.

It localises to the cytoplasm. The protein resides in the nucleus. Functionally, monothiol glutaredoxin involved in the biogenesis of iron-sulfur clusters. Binds one iron-sulfur cluster per dimer. The iron-sulfur cluster is bound between subunits, and is complexed by a bound glutathione and a cysteine residue from each subunit. The chain is Monothiol glutaredoxin-4 (grx4) from Schizosaccharomyces pombe (strain 972 / ATCC 24843) (Fission yeast).